The following is a 338-amino-acid chain: Anthocyanidin reductase ((2S)-flavan-3-ol-forming) (338 aa).

NADP(+) is bound by residues threonine 18 to valine 21, lysine 48, valine 87 to proline 90, and tyrosine 168.

It belongs to the NAD(P)-dependent epimerase/dehydratase family. Dihydroflavonol-4-reductase subfamily.

It catalyses the reaction a (2S,3R)-flavan-3-ol + 2 NADP(+) = an anthocyanidin with a 3-hydroxy group + 2 NADPH + 2 H(+). The catalysed reaction is a (2S,3S)-flavan-3-ol + 2 NADP(+) = an anthocyanidin with a 3-hydroxy group + 2 NADPH + 2 H(+). It functions in the pathway secondary metabolite biosynthesis; flavonoid biosynthesis. Its function is as follows. Produces the terminal flavan-3-ol monomers required for the formation of proanthocyanidins or condensed tannins in leaves and flowers, as well as in the skin and seeds of developing berries. Behaves as a reductase and as a C-3 epimerase. Catalyzes the double reduction of anthocyanidins, producing a mixture of (2S,3S)- and (2S,3R)-flavan-3-ols. The enzyme catalyzes sequential hydride transfers to C-2 and C-4, respectively and epimerization at C-3 is achieved by tautomerization that occurs between the two hydride transfers. Converts cyanidin, pelargonidin and delphinidin into catechin and epicatechin, afzelechin and epiafzelechin, and gallocatechin and epigallocatechin respectively. In Vitis vinifera (Grape), this protein is Anthocyanidin reductase ((2S)-flavan-3-ol-forming).